Reading from the N-terminus, the 196-residue chain is Adenylyl-sulfate kinase (196 aa).

Residue 31-38 participates in ATP binding; the sequence is GLSGAGKS. Residue serine 105 is the Phosphoserine intermediate of the active site.

It belongs to the APS kinase family.

The catalysed reaction is adenosine 5'-phosphosulfate + ATP = 3'-phosphoadenylyl sulfate + ADP + H(+). It participates in sulfur metabolism; hydrogen sulfide biosynthesis; sulfite from sulfate: step 2/3. Catalyzes the synthesis of activated sulfate. In Aeromonas salmonicida (strain A449), this protein is Adenylyl-sulfate kinase.